We begin with the raw amino-acid sequence, 71 residues long: Delta-actitoxin-Avd2b 4 (71 aa).

An N-terminal signal peptide occupies residues 1–20; that stretch reads MMNRLLVFLMLGAFMLVVSA. A propeptide spanning residues 21–41 is cleaved from the precursor; sequence NDAYGDEPAFKDLNQGDESLG. 3 disulfides stabilise this stretch: Cys46–Cys61, Cys47–Cys55, and Cys49–Cys66.

This sequence belongs to the sea anemone short toxin (type III) family.

Its subcellular location is the secreted. The protein resides in the nematocyst. Voltage-gated sodium channel (Nav) inhibitor. 1 uM completely inhibits insect voltage-gated sodium channel inactivation (DmNav1 from D.melanogaster). The sequence is that of Delta-actitoxin-Avd2b 4 from Anemonia viridis (Snakelocks anemone).